We begin with the raw amino-acid sequence, 100 residues long: Aspartyl/glutamyl-tRNA(Asn/Gln) amidotransferase subunit C (100 aa).

The protein belongs to the GatC family. As to quaternary structure, heterotrimer of A, B and C subunits.

The enzyme catalyses L-glutamyl-tRNA(Gln) + L-glutamine + ATP + H2O = L-glutaminyl-tRNA(Gln) + L-glutamate + ADP + phosphate + H(+). The catalysed reaction is L-aspartyl-tRNA(Asn) + L-glutamine + ATP + H2O = L-asparaginyl-tRNA(Asn) + L-glutamate + ADP + phosphate + 2 H(+). Its function is as follows. Allows the formation of correctly charged Asn-tRNA(Asn) or Gln-tRNA(Gln) through the transamidation of misacylated Asp-tRNA(Asn) or Glu-tRNA(Gln) in organisms which lack either or both of asparaginyl-tRNA or glutaminyl-tRNA synthetases. The reaction takes place in the presence of glutamine and ATP through an activated phospho-Asp-tRNA(Asn) or phospho-Glu-tRNA(Gln). This Streptococcus pneumoniae (strain JJA) protein is Aspartyl/glutamyl-tRNA(Asn/Gln) amidotransferase subunit C.